Reading from the N-terminus, the 367-residue chain is tRNA-specific 2-thiouridylase MnmA (367 aa).

ATP contacts are provided by residues 9-16 and F35; that span reads LMSGGVDS. The active-site Nucleophile is the C107. A disulfide bridge links C107 with C205. ATP is bound at residue G131. The interval 155 to 157 is interaction with tRNA; that stretch reads KDQ. C205 acts as the Cysteine persulfide intermediate in catalysis.

Belongs to the MnmA/TRMU family.

The protein resides in the cytoplasm. It carries out the reaction S-sulfanyl-L-cysteinyl-[protein] + uridine(34) in tRNA + AH2 + ATP = 2-thiouridine(34) in tRNA + L-cysteinyl-[protein] + A + AMP + diphosphate + H(+). Catalyzes the 2-thiolation of uridine at the wobble position (U34) of tRNA, leading to the formation of s(2)U34. This chain is tRNA-specific 2-thiouridylase MnmA, found in Petrotoga mobilis (strain DSM 10674 / SJ95).